The primary structure comprises 456 residues: DnaJ homolog dnj-10 (456 aa).

The region spanning 44–108 (DYYKTLGVDK…TKRQEYDAYG (65 aa)) is the J domain. The CR-type zinc finger occupies 178-257 (GATKNVSVNV…CEGEGQTVQR (80 aa)). CXXCXGXG motif repeat units follow at residues 208–215 (CPYCNGTG), 231–238 (CNRCRGSG), and 245–252 (CQECEGEG). A compositionally biased stretch (basic and acidic residues) spans 395 to 429 (KGLEKNQKTEEKETKKNEEKKSEGASESQKRRSEP). Residues 395–443 (KGLEKNQKTEEKETKKNEEKKSEGASESQKRRSEPVAENAETIDENQEN) are disordered.

The chain is DnaJ homolog dnj-10 (dnj-10) from Caenorhabditis elegans.